We begin with the raw amino-acid sequence, 354 residues long: Peptide chain release factor 1 (354 aa).

The residue at position 230 (Gln-230) is an N5-methylglutamine. Residues 282-301 (KQASDAIKKQMIGSGDRSER) are disordered.

Belongs to the prokaryotic/mitochondrial release factor family. In terms of processing, methylated by PrmC. Methylation increases the termination efficiency of RF1.

It is found in the cytoplasm. In terms of biological role, peptide chain release factor 1 directs the termination of translation in response to the peptide chain termination codons UAG and UAA. The protein is Peptide chain release factor 1 of Leptospira borgpetersenii serovar Hardjo-bovis (strain L550).